The following is a 466-amino-acid chain: MTQAAAPQPWSDRFETALHPAIVVFNASIGFDLALIEYDLTGSQAHAQMLAEQDIISREEGEAIVAGLEQIRSEYRTGQFQPGLDAEDVHFAVERRLTELLGDVGKKLHTARSRNDQVGTDTRLYLRDRVDHIRQQLRDYQRVLLSQAEQHLETLIPGYTHLQRAQPLSLAHHLHAYLEMAERDWERLGDLRKRLNTSPLGAGALAGTTFPIDRQRTAALLGFERIYANSLDAVSDRDSLVEFLAAASLIMVHLSRLAEEVILWASEEFRFVRLSDRCATGSSIMPQKKNPDVPELVRGKTGRVFGHLQALLVVLKGLPLAYNKDLQEDKEGLFDAVQTVESCLEAMTILFAEGLSFQPDRLAAAVEADFSNATDVADYLAARGVPFREAYNLVGRVVRTCLEQGKLLKDLSLAEWQALHPQFEADIYTAIAPQQVVAARNSLGGTGFEQVRSALASVRQRLEATC.

The protein belongs to the lyase 1 family. Argininosuccinate lyase subfamily.

The protein localises to the cytoplasm. It carries out the reaction 2-(N(omega)-L-arginino)succinate = fumarate + L-arginine. It participates in amino-acid biosynthesis; L-arginine biosynthesis; L-arginine from L-ornithine and carbamoyl phosphate: step 3/3. The polypeptide is Argininosuccinate lyase (Synechococcus elongatus (strain ATCC 33912 / PCC 7942 / FACHB-805) (Anacystis nidulans R2)).